The primary structure comprises 177 residues: Phosphatidylglycerol/phosphatidylinositol transfer protein (177 aa).

An N-terminal signal peptide occupies residues 1-17 (MRLSAAVIALLSTSAAA). A propeptide spanning residues 18 to 30 (FSVYRENSVSAND) is cleaved from the precursor.

The protein belongs to the NPC2 family. As to quaternary structure, monomer.

Its function is as follows. Catalyzes the intermembrane transfer of phosphatidylglycerol and phosphatidylinositol. The chain is Phosphatidylglycerol/phosphatidylinositol transfer protein (npc-2) from Neurospora crassa (strain ATCC 24698 / 74-OR23-1A / CBS 708.71 / DSM 1257 / FGSC 987).